Reading from the N-terminus, the 287-residue chain is Uroplakin-3a (287 aa).

The N-terminal stretch at M1–G18 is a signal peptide. Residues V19–G207 lie on the Lumenal side of the membrane. N74, N139, and N170 each carry an N-linked (GlcNAc...) asparagine glycan. The chain crosses the membrane as a helical span at residues M208–V235. Over D236–D287 the chain is Cytoplasmic. Residues A243–S274 form a disordered region. Residues L259–R271 show a composition bias toward polar residues.

The protein belongs to the uroplakin-3 family. As to quaternary structure, heterodimer with uroplakin-1B (UPK1B). Bladder epithelium.

The protein resides in the endoplasmic reticulum membrane. In terms of biological role, component of the asymmetric unit membrane (AUM); a highly specialized biomembrane elaborated by terminally differentiated urothelial cells. May play an important role in AUM-cytoskeleton interaction in terminally differentiated urothelial cells. It also contributes to the formation of urothelial glycocalyx which may play an important role in preventing bacterial adherence. In Bos taurus (Bovine), this protein is Uroplakin-3a (UPK3A).